The following is a 60-amino-acid chain: Short neurotoxin 1 (60 aa).

Cystine bridges form between Cys-3–Cys-22, Cys-17–Cys-39, Cys-41–Cys-52, and Cys-53–Cys-58.

It belongs to the three-finger toxin family. Short-chain subfamily. Type I alpha-neurotoxin sub-subfamily. Expressed by the venom gland.

Its subcellular location is the secreted. In terms of biological role, binds to muscle nicotinic acetylcholine receptor (nAChR) and inhibit acetylcholine from binding to the receptor, thereby impairing neuromuscular transmission. The chain is Short neurotoxin 1 from Hydrophis ornatus (Ornate reef seasnake).